The primary structure comprises 942 residues: UvrABC system protein A (942 aa).

Residue 32 to 39 (GLSGSGKS) coordinates ATP. Residues 251–278 (CPVCGFTVPELEPRLFSFNAPFGSCPTC) form a C4-type zinc finger. ABC transporter domains lie at 308 to 589 (WNPI…KKSI) and 609 to 937 (GNGR…HYLK). 641-648 (GVSGSGKS) is a binding site for ATP. The segment at 740–766 (CEACSGDGIIKIEMHFLPDVYVPCEVC) adopts a C4-type zinc-finger fold.

This sequence belongs to the ABC transporter superfamily. UvrA family. Forms a heterotetramer with UvrB during the search for lesions.

It is found in the cytoplasm. In terms of biological role, the UvrABC repair system catalyzes the recognition and processing of DNA lesions. UvrA is an ATPase and a DNA-binding protein. A damage recognition complex composed of 2 UvrA and 2 UvrB subunits scans DNA for abnormalities. When the presence of a lesion has been verified by UvrB, the UvrA molecules dissociate. In Streptococcus pyogenes serotype M3 (strain ATCC BAA-595 / MGAS315), this protein is UvrABC system protein A.